A 276-amino-acid polypeptide reads, in one-letter code: NAD(+)--dinitrogen-reductase ADP-D-ribosyltransferase (276 aa).

As to quaternary structure, monomer.

The catalysed reaction is L-arginyl-[dinitrogen reductase] + NAD(+) = N(omega)-alpha-(ADP-D-ribosyl)-L-arginyl-[dinitrogen reductase] + nicotinamide + H(+). Involved in the regulation of the nitrogen fixation activity by the reversible ADP-ribosylation of the dinitrogenase reductase component of the nitrogenase enzyme complex. The ADP-ribosyltransferase (DraT) transfers the ADP-ribose group from NAD to dinitrogenase reductase. The ADP-ribose group is removed through the action of the ADP-ribosylglycohydrolase (DraG). The sequence is that of NAD(+)--dinitrogen-reductase ADP-D-ribosyltransferase (draT) from Rhodospirillum rubrum.